The primary structure comprises 287 residues: Rhodopsin (287 aa).

The Extracellular segment spans residues V1–A5. A helical membrane pass occupies residues Y6–V30. The Cytoplasmic portion of the chain corresponds to T31–N42. Residues Y43–Y65 traverse the membrane as a helical segment. Residues T66–C79 lie on the Extracellular side of the membrane. The cysteines at positions 79 and 156 are disulfide-linked. A helical membrane pass occupies residues N80–V102. The short motif at E103–W105 is the 'Ionic lock' involved in activated form stabilization element. The Cytoplasmic segment spans residues E103–H121. Residues A122 to V142 form a helical membrane-spanning segment. Topologically, residues G143–S171 are extracellular. A glycan (N-linked (GlcNAc...) asparagine) is linked at N169. The helical transmembrane segment at L172–G193 threads the bilayer. Topologically, residues R194–R221 are cytoplasmic. A helical transmembrane segment spans residues M222 to Y243. The Extracellular portion of the chain corresponds to I244 to V255. Residues F256 to C277 traverse the membrane as a helical segment. K265 bears the N6-(retinylidene)lysine mark. At M278–I287 the chain is on the cytoplasmic side.

It belongs to the G-protein coupled receptor 1 family. Opsin subfamily. In terms of processing, phosphorylated on some or all of the serine and threonine residues present in the C-terminal region. Contains one covalently linked retinal chromophore.

It is found in the membrane. It localises to the cell projection. The protein resides in the cilium. The protein localises to the photoreceptor outer segment. Its function is as follows. Photoreceptor required for image-forming vision at low light intensity. While most salt water fish species use retinal as chromophore, most freshwater fish use 3-dehydroretinal, or a mixture of retinal and 3-dehydroretinal. Light-induced isomerization of 11-cis to all-trans retinal triggers a conformational change that activates signaling via G-proteins. Subsequent receptor phosphorylation mediates displacement of the bound G-protein alpha subunit by arrestin and terminates signaling. This Taurulus bubalis (Long-spined sea scorpion) protein is Rhodopsin (rho).